Reading from the N-terminus, the 102-residue chain is Small ribosomal subunit protein uS10 (102 aa).

It belongs to the universal ribosomal protein uS10 family. Part of the 30S ribosomal subunit.

Its function is as follows. Involved in the binding of tRNA to the ribosomes. This Thiobacillus denitrificans (strain ATCC 25259 / T1) protein is Small ribosomal subunit protein uS10.